The primary structure comprises 196 residues: Protein GrpE (196 aa).

The disordered stretch occupies residues 1–40 (MSSKEQKTPEGQAPEEIIMDQHEEVEAVEPNDSAEQVDPR).

This sequence belongs to the GrpE family. As to quaternary structure, homodimer.

Its subcellular location is the cytoplasm. In terms of biological role, participates actively in the response to hyperosmotic and heat shock by preventing the aggregation of stress-denatured proteins, in association with DnaK and GrpE. It is the nucleotide exchange factor for DnaK and may function as a thermosensor. Unfolded proteins bind initially to DnaJ; upon interaction with the DnaJ-bound protein, DnaK hydrolyzes its bound ATP, resulting in the formation of a stable complex. GrpE releases ADP from DnaK; ATP binding to DnaK triggers the release of the substrate protein, thus completing the reaction cycle. Several rounds of ATP-dependent interactions between DnaJ, DnaK and GrpE are required for fully efficient folding. This is Protein GrpE from Salmonella enteritidis PT4 (strain P125109).